The chain runs to 194 residues: Glycerol-3-phosphate acyltransferase (194 aa).

6 consecutive transmembrane segments (helical) span residues 2-22 (AFFCFIVLTYFIGAIPSGVWI), 52-72 (LGVAVLIMDVLKGFIPLYIAS), 80-100 (DLVILGLVAILAHTFSCFISF), 112-132 (VFLFLIPVITLILLAIFILVA), 137-157 (YVSLASITAAFLLPIFTFFTH), and 161-181 (YLFALSVIIAVFVIYRHKTNI).

Belongs to the PlsY family. As to quaternary structure, probably interacts with PlsX.

It localises to the cell inner membrane. It carries out the reaction an acyl phosphate + sn-glycerol 3-phosphate = a 1-acyl-sn-glycero-3-phosphate + phosphate. It participates in lipid metabolism; phospholipid metabolism. In terms of biological role, catalyzes the transfer of an acyl group from acyl-phosphate (acyl-PO(4)) to glycerol-3-phosphate (G3P) to form lysophosphatidic acid (LPA). This enzyme utilizes acyl-phosphate as fatty acyl donor, but not acyl-CoA or acyl-ACP. The chain is Glycerol-3-phosphate acyltransferase from Fusobacterium nucleatum subsp. nucleatum (strain ATCC 25586 / DSM 15643 / BCRC 10681 / CIP 101130 / JCM 8532 / KCTC 2640 / LMG 13131 / VPI 4355).